The primary structure comprises 288 residues: Acetyl-coenzyme A carboxylase carboxyl transferase subunit beta (288 aa).

In terms of domain architecture, CoA carboxyltransferase N-terminal spans leucine 32–valine 288. Positions 36, 39, 54, and 57 each coordinate Zn(2+). The C4-type zinc finger occupies cysteine 36–cysteine 57.

It belongs to the AccD/PCCB family. In terms of assembly, acetyl-CoA carboxylase is a heterohexamer composed of biotin carboxyl carrier protein (AccB), biotin carboxylase (AccC) and two subunits each of ACCase subunit alpha (AccA) and ACCase subunit beta (AccD). Requires Zn(2+) as cofactor.

It is found in the cytoplasm. The enzyme catalyses N(6)-carboxybiotinyl-L-lysyl-[protein] + acetyl-CoA = N(6)-biotinyl-L-lysyl-[protein] + malonyl-CoA. The protein operates within lipid metabolism; malonyl-CoA biosynthesis; malonyl-CoA from acetyl-CoA: step 1/1. Functionally, component of the acetyl coenzyme A carboxylase (ACC) complex. Biotin carboxylase (BC) catalyzes the carboxylation of biotin on its carrier protein (BCCP) and then the CO(2) group is transferred by the transcarboxylase to acetyl-CoA to form malonyl-CoA. In Lactococcus lactis subsp. cremoris (strain MG1363), this protein is Acetyl-coenzyme A carboxylase carboxyl transferase subunit beta.